A 224-amino-acid polypeptide reads, in one-letter code: MHGTDSSSDTPGQPAPSRAELLSAHAEGSISEDTILKTARDRAVDIGVGAVTPAVGALLSMLAKLSGGKAVAEVGTGAGVSGLWLLSGMSDDGVLTTIDIEPEHLRVAKQAFTEAGIGPSRTRLISGRAQEVLTRLADDSYDLVFVDADPIDQPDYVVEGVRLLRSGGVIVVHRAALGGRAGDPAARDAEVTAVREAARLIAEDERLTPALVPLGDGVLAAVRD.

Positions 1-11 (MHGTDSSSDTP) are enriched in polar residues. The disordered stretch occupies residues 1-20 (MHGTDSSSDTPGQPAPSRAE). Residues Val-51, Glu-73, 75–76 (GT), Ser-81, Asp-99, and Ile-100 contribute to the S-adenosyl-L-methionine site. Asp-147 contacts substrate. An S-adenosyl-L-methionine-binding site is contributed by Asp-149.

Belongs to the class I-like SAM-binding methyltransferase superfamily. Cation-dependent O-methyltransferase family.

The chain is Putative O-methyltransferase MMAR_4217 from Mycobacterium marinum (strain ATCC BAA-535 / M).